A 182-amino-acid chain; its full sequence is Ribulose bisphosphate carboxylase small subunit, chloroplastic 4 (182 aa).

The transit peptide at M1–R41 directs the protein to the chloroplast.

Belongs to the RuBisCO small chain family. In terms of assembly, heterohexadecamer of 8 large and 8 small subunits.

Its subcellular location is the plastid. It is found in the chloroplast. RuBisCO catalyzes two reactions: the carboxylation of D-ribulose 1,5-bisphosphate, the primary event in carbon dioxide fixation, as well as the oxidative fragmentation of the pentose substrate. Both reactions occur simultaneously and in competition at the same active site. Although the small subunit is not catalytic it is essential for maximal activity. This is Ribulose bisphosphate carboxylase small subunit, chloroplastic 4 from Acetabularia acetabulum (Mermaid's wine glass).